A 124-amino-acid polypeptide reads, in one-letter code: Ribonuclease pancreatic (124 aa).

Residues 1 to 13 (KETAAEKFQRQHM) show a composition bias toward basic and acidic residues. A disordered region spans residues 1-21 (KETAAEKFQRQHMDTSSSLSN). Residues Lys-7 and Arg-10 each coordinate substrate. His-12 serves as the catalytic Proton acceptor. 4 disulfides stabilise this stretch: Cys-26-Cys-84, Cys-40-Cys-95, Cys-58-Cys-110, and Cys-65-Cys-72. An N-linked (GlcNAc...) asparagine glycan is attached at Asn-34. Substrate contacts are provided by residues 41–45 (KPVNT), Lys-66, and Arg-85. His-119 functions as the Proton donor in the catalytic mechanism.

The protein belongs to the pancreatic ribonuclease family. In terms of assembly, monomer. Interacts with and forms tight 1:1 complexes with RNH1. Dimerization of two such complexes may occur. Interaction with RNH1 inhibits this protein. As to expression, pancreas.

It is found in the secreted. The enzyme catalyses an [RNA] containing cytidine + H2O = an [RNA]-3'-cytidine-3'-phosphate + a 5'-hydroxy-ribonucleotide-3'-[RNA].. It catalyses the reaction an [RNA] containing uridine + H2O = an [RNA]-3'-uridine-3'-phosphate + a 5'-hydroxy-ribonucleotide-3'-[RNA].. In terms of biological role, endonuclease that catalyzes the cleavage of RNA on the 3' side of pyrimidine nucleotides. Acts on single-stranded and double-stranded RNA. The chain is Ribonuclease pancreatic (RNASE1) from Hippopotamus amphibius (Hippopotamus).